The sequence spans 231 residues: 5'-methylthioadenosine/S-adenosylhomocysteine nucleosidase (231 aa).

E12 (proton acceptor) is an active-site residue. Substrate-binding positions include G78, M153, and 174–175 (ME). Catalysis depends on D198, which acts as the Proton donor.

It belongs to the PNP/UDP phosphorylase family. MtnN subfamily.

It carries out the reaction S-adenosyl-L-homocysteine + H2O = S-(5-deoxy-D-ribos-5-yl)-L-homocysteine + adenine. It catalyses the reaction S-methyl-5'-thioadenosine + H2O = 5-(methylsulfanyl)-D-ribose + adenine. The enzyme catalyses 5'-deoxyadenosine + H2O = 5-deoxy-D-ribose + adenine. It participates in amino-acid biosynthesis; L-methionine biosynthesis via salvage pathway; S-methyl-5-thio-alpha-D-ribose 1-phosphate from S-methyl-5'-thioadenosine (hydrolase route): step 1/2. In terms of biological role, catalyzes the irreversible cleavage of the glycosidic bond in both 5'-methylthioadenosine (MTA) and S-adenosylhomocysteine (SAH/AdoHcy) to adenine and the corresponding thioribose, 5'-methylthioribose and S-ribosylhomocysteine, respectively. Also cleaves 5'-deoxyadenosine, a toxic by-product of radical S-adenosylmethionine (SAM) enzymes, into 5-deoxyribose and adenine. The chain is 5'-methylthioadenosine/S-adenosylhomocysteine nucleosidase from Bacillus velezensis (strain DSM 23117 / BGSC 10A6 / LMG 26770 / FZB42) (Bacillus amyloliquefaciens subsp. plantarum).